Here is a 253-residue protein sequence, read N- to C-terminus: Proteasome subunit alpha type-3 (253 aa).

The segment at 230–253 (ELTEKARKAGDAANKDEDSDNETH) is disordered. Over residues 231 to 253 (LTEKARKAGDAANKDEDSDNETH) the composition is skewed to basic and acidic residues. At S248 the chain carries Phosphoserine.

The protein belongs to the peptidase T1A family. As to quaternary structure, the 26S proteasome consists of a 20S proteasome core and two 19S regulatory subunits. The 20S proteasome core is composed of 28 subunits that are arranged in four stacked rings, resulting in a barrel-shaped structure. The two end rings are each formed by seven alpha subunits, and the two central rings are each formed by seven beta subunits. The catalytic chamber with the active sites is on the inside of the barrel. Interacts with ntc.

Its subcellular location is the cytoplasm. The protein resides in the nucleus. The proteasome is a multicatalytic proteinase complex which is characterized by its ability to cleave peptides with Arg, Phe, Tyr, Leu, and Glu adjacent to the leaving group at neutral or slightly basic pH. The proteasome has an ATP-dependent proteolytic activity. The chain is Proteasome subunit alpha type-3 (Prosalpha7) from Drosophila melanogaster (Fruit fly).